We begin with the raw amino-acid sequence, 359 residues long: 4-hydroxy-3-methylbut-2-en-1-yl diphosphate synthase (flavodoxin) (359 aa).

4 residues coordinate [4Fe-4S] cluster: Cys264, Cys267, Cys299, and Glu306.

The protein belongs to the IspG family. Requires [4Fe-4S] cluster as cofactor.

The enzyme catalyses (2E)-4-hydroxy-3-methylbut-2-enyl diphosphate + oxidized [flavodoxin] + H2O + 2 H(+) = 2-C-methyl-D-erythritol 2,4-cyclic diphosphate + reduced [flavodoxin]. The protein operates within isoprenoid biosynthesis; isopentenyl diphosphate biosynthesis via DXP pathway; isopentenyl diphosphate from 1-deoxy-D-xylulose 5-phosphate: step 5/6. In terms of biological role, converts 2C-methyl-D-erythritol 2,4-cyclodiphosphate (ME-2,4cPP) into 1-hydroxy-2-methyl-2-(E)-butenyl 4-diphosphate. The sequence is that of 4-hydroxy-3-methylbut-2-en-1-yl diphosphate synthase (flavodoxin) from Helicobacter pylori (strain G27).